The primary structure comprises 149 residues: UPF0178 protein Pmen_0294 (149 aa).

It belongs to the UPF0178 family.

The protein is UPF0178 protein Pmen_0294 of Ectopseudomonas mendocina (strain ymp) (Pseudomonas mendocina).